Reading from the N-terminus, the 522-residue chain is Protein tweety homolog 3 (522 aa).

At 1 to 43 the chain is on the extracellular side; that stretch reads MAAAISYTPPWWVNLLHRLPHLNLQWESLNGDFRPEDPDYQQS. The helical transmembrane segment at 44–64 threads the bilayer; it reads LMLLACVALSCLALDLLFLLF. The Cytoplasmic segment spans residues 65-87; it reads YSFWFCCRHRKTEENTNADCCCT. The helical transmembrane segment at 88 to 108 threads the bilayer; that stretch reads VWCVIVATLVCSAGIAVGFYG. Over 109–211 the chain is Extracellular; it reads NGETSDGIHR…VDLFDWYRWL (103 aa). 2 residues coordinate Ca(2+): E111 and D114. 2 N-linked (GlcNAc...) asparagine glycosylation sites follow: N127 and N145. Residues 212–232 traverse the membrane as a helical segment; it reads GYLGLLLFHVFICLLVLFGLI. Residues 233–238 are Cytoplasmic-facing; that stretch reads RNSKGT. A helical membrane pass occupies residues 239-259; the sequence is LICVCFLGMMALIISWASMGL. Topologically, residues 260 to 386 are extracellular; the sequence is ELAVAVGSSD…LTGFCYDGVE (127 aa). 2 disulfide bridges follow: C271–C381 and C299–C366. N-linked (GlcNAc...) asparagine glycosylation occurs at N351. The chain crosses the membrane as a helical span at residues 387–407; that stretch reads GLIYLVLFSFVTALMFSSIVC. Residues 408–522 are Cytoplasmic-facing; the sequence is SVPHTWQQRR…TNRPETDPVH (115 aa). The segment at 483 to 522 is disordered; it reads QNPRCENTPLIGRESPPPSYTSSMRAKYLATNRPETDPVH.

The protein belongs to the tweety family. As to quaternary structure, homotetramer; disulfide-linked. Forms cis-homodimers in the presence of Ca(2+).

It is found in the cell membrane. The enzyme catalyses chloride(in) = chloride(out). It carries out the reaction L-glutamate(out) = L-glutamate(in). In terms of biological role, may act as a calcium-independent, swelling-dependent volume-regulated anion channel (VRAC-swell) which plays a pivotal role in the process of regulatory volume decrease (RVD) in the brain through the efflux of anions like chloride and organic osmolytes like glutamate. Probable large-conductance Ca(2+)-activated chloride channel. This Xenopus laevis (African clawed frog) protein is Protein tweety homolog 3 (ttyh3).